The sequence spans 172 residues: uncharacterized protein (172 aa).

One can recognise a PfpI endopeptidase domain in the interval 3-171 (KKVAIILADE…FNREIVKKLE (169 aa)).

Belongs to the peptidase C56 family.

This is an uncharacterized protein from Staphylococcus epidermidis (strain ATCC 35984 / DSM 28319 / BCRC 17069 / CCUG 31568 / BM 3577 / RP62A).